The following is a 213-amino-acid chain: MSDLDDSFAKLLGRQPSDAERQSLYRVRDALGLKNNDALWLVLMALQHYQGQYEKFPQAIAQAAKDTLVNFKVTADATVKASAEAAKADLAQAVAAAAQEVAHNTSAKQMWQWAAGCIAVAFLCVGLFGWYMHSSGKDSGYQAGYGAGYTEAKDEKAAAAWANTPEGRTAYRFAQSGELQRLARCSGKGWKVEKGACYPYPVANEGTYGWALP.

The sequence is that of Protein MobE (mobE) from Acidithiobacillus ferrooxidans (Thiobacillus ferrooxidans).